Here is a 196-residue protein sequence, read N- to C-terminus: MLYTKKLNKKKLNTKEINIKTGKKFYSIRLHKINEEIKAKTVRLTGINGVQLGIVPIKEAIFKSLELEMDLVEISPNSNPPVCKIMNYGKFLYEKNKSNKEQKRKQKIINTKEIKFRPNTDTGDYKVKLRNLTRFLENGKKVKISLRFRGREMVHKKIGINMLNRICSDLKEISSIESFPNKIEGRQMTLILVPKK.

Belongs to the IF-3 family. Monomer.

It is found in the cytoplasm. IF-3 binds to the 30S ribosomal subunit and shifts the equilibrium between 70S ribosomes and their 50S and 30S subunits in favor of the free subunits, thus enhancing the availability of 30S subunits on which protein synthesis initiation begins. The chain is Translation initiation factor IF-3 from Wigglesworthia glossinidia brevipalpis.